We begin with the raw amino-acid sequence, 207 residues long: Small ribosomal subunit protein uS4 (207 aa).

The tract at residues 31–54 is disordered; it reads KSKFETKPGQHGRTSGSRTSDFGL. Residues 42–52 show a composition bias toward polar residues; that stretch reads GRTSGSRTSDF. The S4 RNA-binding domain maps to 97 to 158; sequence SRLDNVVYRM…KAKKQLRVTE (62 aa).

This sequence belongs to the universal ribosomal protein uS4 family. As to quaternary structure, part of the 30S ribosomal subunit. Contacts protein S5. The interaction surface between S4 and S5 is involved in control of translational fidelity.

One of the primary rRNA binding proteins, it binds directly to 16S rRNA where it nucleates assembly of the body of the 30S subunit. Its function is as follows. With S5 and S12 plays an important role in translational accuracy. In Methylibium petroleiphilum (strain ATCC BAA-1232 / LMG 22953 / PM1), this protein is Small ribosomal subunit protein uS4.